The primary structure comprises 435 residues: Type A flavoprotein fprA (435 aa).

The interval 48–228 (ANGTTYNAYA…PFRSFVAQVL (181 aa)) is zinc metallo-hydrolase. Positions 98, 100, 102, 167, 186, and 243 each coordinate Fe cation. The Flavodoxin-like domain maps to 276-415 (LLIFYVSAYR…EGRAFGRRLA (140 aa)).

In the N-terminal section; belongs to the zinc metallo-hydrolase group 3 family. As to quaternary structure, homodimer. The cofactor is FMN. It depends on Fe cation as a cofactor.

In terms of biological role, low-potential electron donor to a number of redox enzymes. The chain is Type A flavoprotein fprA (fprA) from Rhodobacter capsulatus (Rhodopseudomonas capsulata).